The sequence spans 1024 residues: Beta-galactosidase (1024 aa).

Substrate contacts are provided by N103 and D202. Position 202 (D202) interacts with Na(+). E417, H419, and E462 together coordinate Mg(2+). Substrate is bound by residues E462 and 538-541 (EYAH). E462 serves as the catalytic Proton donor. E538 acts as the Nucleophile in catalysis. A Mg(2+)-binding site is contributed by N598. Residues F602 and N605 each contribute to the Na(+) site. Substrate-binding residues include N605 and W1000.

The protein belongs to the glycosyl hydrolase 2 family. In terms of assembly, homotetramer. Mg(2+) serves as cofactor. Requires Na(+) as cofactor.

The enzyme catalyses Hydrolysis of terminal non-reducing beta-D-galactose residues in beta-D-galactosides.. This is Beta-galactosidase from Escherichia coli O1:K1 / APEC.